The primary structure comprises 245 residues: Polyhedrin (245 aa).

Belongs to the polyhedrin family.

Its function is as follows. Major component of the virus occlusion bodies, which are large proteinaceous structures (polyhedra), that protect the virus from the outside environment for extended periods until they are ingested by insect larvae. In Hyphantria cunea nuclear polyhedrosis virus (HcNPV), this protein is Polyhedrin (PH).